The primary structure comprises 397 residues: Succinyl-diaminopimelate desuccinylase (397 aa).

His73 contributes to the Zn(2+) binding site. Residue Asp75 is part of the active site. Zn(2+) is bound at residue Asp106. The active-site Proton acceptor is the Glu140. Zn(2+)-binding residues include Glu141, Glu169, and His366.

The protein belongs to the peptidase M20A family. DapE subfamily. Homodimer. Requires Zn(2+) as cofactor. It depends on Co(2+) as a cofactor.

It catalyses the reaction N-succinyl-(2S,6S)-2,6-diaminopimelate + H2O = (2S,6S)-2,6-diaminopimelate + succinate. It functions in the pathway amino-acid biosynthesis; L-lysine biosynthesis via DAP pathway; LL-2,6-diaminopimelate from (S)-tetrahydrodipicolinate (succinylase route): step 3/3. In terms of biological role, catalyzes the hydrolysis of N-succinyl-L,L-diaminopimelic acid (SDAP), forming succinate and LL-2,6-diaminopimelate (DAP), an intermediate involved in the bacterial biosynthesis of lysine and meso-diaminopimelic acid, an essential component of bacterial cell walls. This chain is Succinyl-diaminopimelate desuccinylase, found in Rhizobium meliloti (strain 1021) (Ensifer meliloti).